A 602-amino-acid chain; its full sequence is Elongation factor 4 (602 aa).

Residues 7 to 189 (SQIRNFSIIA…AIVHRIPPPA (183 aa)) form the tr-type G domain. GTP is bound by residues 19-24 (DHGKST) and 136-139 (NKID).

The protein belongs to the TRAFAC class translation factor GTPase superfamily. Classic translation factor GTPase family. LepA subfamily.

Its subcellular location is the cell inner membrane. It carries out the reaction GTP + H2O = GDP + phosphate + H(+). Its function is as follows. Required for accurate and efficient protein synthesis under certain stress conditions. May act as a fidelity factor of the translation reaction, by catalyzing a one-codon backward translocation of tRNAs on improperly translocated ribosomes. Back-translocation proceeds from a post-translocation (POST) complex to a pre-translocation (PRE) complex, thus giving elongation factor G a second chance to translocate the tRNAs correctly. Binds to ribosomes in a GTP-dependent manner. In Gloeobacter violaceus (strain ATCC 29082 / PCC 7421), this protein is Elongation factor 4.